The chain runs to 339 residues: Biotin synthase (339 aa).

The Radical SAM core domain occupies 51–278 (TEVELATLLS…KARVRLSAGR (228 aa)). The [4Fe-4S] cluster site is built by C66, C70, and C73. The [2Fe-2S] cluster site is built by C110, C141, C201, and R273.

This sequence belongs to the radical SAM superfamily. Biotin synthase family. In terms of assembly, homodimer. It depends on [4Fe-4S] cluster as a cofactor. The cofactor is [2Fe-2S] cluster.

The enzyme catalyses (4R,5S)-dethiobiotin + (sulfur carrier)-SH + 2 reduced [2Fe-2S]-[ferredoxin] + 2 S-adenosyl-L-methionine = (sulfur carrier)-H + biotin + 2 5'-deoxyadenosine + 2 L-methionine + 2 oxidized [2Fe-2S]-[ferredoxin]. It functions in the pathway cofactor biosynthesis; biotin biosynthesis; biotin from 7,8-diaminononanoate: step 2/2. Catalyzes the conversion of dethiobiotin (DTB) to biotin by the insertion of a sulfur atom into dethiobiotin via a radical-based mechanism. This Janthinobacterium sp. (strain Marseille) (Minibacterium massiliensis) protein is Biotin synthase.